The chain runs to 88 residues: Large ribosomal subunit protein bL27 (88 aa).

The tract at residues 1–21 (MAHKKGASSSRNGRDSNAKRL) is disordered.

Belongs to the bacterial ribosomal protein bL27 family.

This chain is Large ribosomal subunit protein bL27, found in Thermobifida fusca (strain YX).